We begin with the raw amino-acid sequence, 142 residues long: Ribosome maturation factor RimP (142 aa).

This sequence belongs to the RimP family.

Its subcellular location is the cytoplasm. In terms of biological role, required for maturation of 30S ribosomal subunits. The polypeptide is Ribosome maturation factor RimP (Nitrosospira multiformis (strain ATCC 25196 / NCIMB 11849 / C 71)).